Reading from the N-terminus, the 183-residue chain is Adenine phosphoribosyltransferase (183 aa).

The protein belongs to the purine/pyrimidine phosphoribosyltransferase family. In terms of assembly, homodimer.

The protein localises to the cytoplasm. It catalyses the reaction AMP + diphosphate = 5-phospho-alpha-D-ribose 1-diphosphate + adenine. The protein operates within purine metabolism; AMP biosynthesis via salvage pathway; AMP from adenine: step 1/1. Its function is as follows. Catalyzes a salvage reaction resulting in the formation of AMP, that is energically less costly than de novo synthesis. The chain is Adenine phosphoribosyltransferase from Shigella flexneri serotype 5b (strain 8401).